Consider the following 503-residue polypeptide: Aromatase (503 aa).

The helical transmembrane segment at 21-41 threads the bilayer; it reads VTVSAMPLLLIMGLLLLIWNC. Residues Asp309 and Met374 each contribute to the substrate site. Cys437 contacts heme.

This sequence belongs to the cytochrome P450 family. It depends on heme as a cofactor.

Its subcellular location is the endoplasmic reticulum membrane. It is found in the microsome membrane. It catalyses the reaction testosterone + 3 reduced [NADPH--hemoprotein reductase] + 3 O2 = 17beta-estradiol + formate + 3 oxidized [NADPH--hemoprotein reductase] + 4 H2O + 4 H(+). The catalysed reaction is androst-4-ene-3,17-dione + 3 reduced [NADPH--hemoprotein reductase] + 3 O2 = estrone + formate + 3 oxidized [NADPH--hemoprotein reductase] + 4 H2O + 4 H(+). It carries out the reaction androst-4-ene-3,17-dione + reduced [NADPH--hemoprotein reductase] + O2 = 19-hydroxyandrost-4-ene-3,17-dione + oxidized [NADPH--hemoprotein reductase] + H2O + H(+). The enzyme catalyses 19-hydroxyandrost-4-ene-3,17-dione + reduced [NADPH--hemoprotein reductase] + O2 = 19-oxo-androst-4-ene-3,17-dione + oxidized [NADPH--hemoprotein reductase] + 2 H2O + H(+). It catalyses the reaction 19-oxo-androst-4-ene-3,17-dione + reduced [NADPH--hemoprotein reductase] + O2 = estrone + formate + oxidized [NADPH--hemoprotein reductase] + H2O + 2 H(+). The catalysed reaction is estrone + reduced [NADPH--hemoprotein reductase] + O2 = 2-hydroxyestrone + oxidized [NADPH--hemoprotein reductase] + H2O + H(+). It carries out the reaction 17beta-hydroxy-5alpha-androstan-3-one + reduced [NADPH--hemoprotein reductase] + O2 = 17beta,19-dihydroxy-3-oxo-5alpha-androstanone + oxidized [NADPH--hemoprotein reductase] + H2O + H(+). The enzyme catalyses 17beta,19-dihydroxy-3-oxo-5alpha-androstanone + reduced [NADPH--hemoprotein reductase] + O2 = 17beta-hydroxy-3,19-dioxo-5alpha-androstanone + oxidized [NADPH--hemoprotein reductase] + 2 H2O + H(+). It catalyses the reaction 17beta-hydroxy-3,19-dioxo-5alpha-androstanone + reduced [NADPH--hemoprotein reductase] + O2 = 17beta-hydroxy-3-oxo-19-nor-5alpha-androst-1-ene + formate + oxidized [NADPH--hemoprotein reductase] + H2O + 2 H(+). It participates in steroid hormone biosynthesis. In terms of biological role, a cytochrome P450 monooxygenase that catalyzes the conversion of C19 androgens, androst-4-ene-3,17-dione (androstenedione) and testosterone to the C18 estrogens, estrone and estradiol, respectively. Catalyzes three successive oxidations of C19 androgens: two conventional oxidations at C19 yielding 19-hydroxy and 19-oxo/19-aldehyde derivatives, followed by a third oxidative aromatization step that involves C1-beta hydrogen abstraction combined with cleavage of the C10-C19 bond to yield a phenolic A ring and formic acid. Alternatively, the third oxidative reaction yields a 19-norsteroid and formic acid. Converts dihydrotestosterone to delta1,10-dehydro 19-nordihydrotestosterone and may play a role in homeostasis of this potent androgen. Also displays 2-hydroxylase activity toward estrone. Mechanistically, uses molecular oxygen inserting one oxygen atom into a substrate, and reducing the second into a water molecule, with two electrons provided by NADPH via cytochrome P450 reductase (CPR; NADPH-ferrihemoprotein reductase). The sequence is that of Aromatase (Cyp19a1) from Mus musculus (Mouse).